Reading from the N-terminus, the 279-residue chain is Membrane protein insertase YidC (279 aa).

A signal peptide spans 1–22; it reads MKHLKRNMALLSVAALSFILTA. Cys23 carries the N-palmitoyl cysteine lipid modification. A lipid anchor (S-diacylglycerol cysteine) is attached at Cys23. 5 helical membrane-spanning segments follow: residues 35–55, 59–79, 129–149, 170–190, and 210–230; these read IWDG…SKLF, YGWG…PLMI, MAGC…YAAV, PYFI…WLSM, and PLVI…YWVV. Residues 253-268 are compositionally biased toward basic and acidic residues; the sequence is EEKIQTEKAKRKAIEK. Residues 253–279 form a disordered region; the sequence is EEKIQTEKAKRKAIEKAKRRAMKSKRK. The span at 269-279 shows a compositional bias: basic residues; the sequence is AKRRAMKSKRK.

This sequence belongs to the OXA1/ALB3/YidC family. Type 2 subfamily.

The protein resides in the cell membrane. Functionally, required for the insertion and/or proper folding and/or complex formation of integral membrane proteins into the membrane. Involved in integration of membrane proteins that insert both dependently and independently of the Sec translocase complex, as well as at least some lipoproteins. The polypeptide is Membrane protein insertase YidC (Pediococcus pentosaceus (strain ATCC 25745 / CCUG 21536 / LMG 10740 / 183-1w)).